Here is a 507-residue protein sequence, read N- to C-terminus: ATP synthase subunit alpha (507 aa).

169 to 176 is a binding site for ATP; it reads GDRQTGKT.

It belongs to the ATPase alpha/beta chains family. As to quaternary structure, F-type ATPases have 2 components, CF(1) - the catalytic core - and CF(0) - the membrane proton channel. CF(1) has five subunits: alpha(3), beta(3), gamma(1), delta(1), epsilon(1). CF(0) has three main subunits: a(1), b(2) and c(9-12). The alpha and beta chains form an alternating ring which encloses part of the gamma chain. CF(1) is attached to CF(0) by a central stalk formed by the gamma and epsilon chains, while a peripheral stalk is formed by the delta and b chains. In this bacterium the a and b subunits are transcribed but do not seem to be translated, thus the ATP synthase consists of the alpha, beta, gamma, delta, epsilon and c subunits.

It is found in the cell membrane. It catalyses the reaction ATP + H2O + 4 H(+)(in) = ADP + phosphate + 5 H(+)(out). Its function is as follows. Produces ATP from ADP in the presence of a proton gradient across the membrane. The alpha chain is a regulatory subunit. This Moorella thermoacetica (strain ATCC 39073 / JCM 9320) protein is ATP synthase subunit alpha.